Reading from the N-terminus, the 619-residue chain is MSEVLQRITDPKEIKDLDEKELEILAEDLREFLIESVSNTGGHFASNLGVIDLTVALFKNFDFSEDRIIWDVGHQSYAYKILTGRKDKFNTLRQYGGLCGFPKRTESEYDFFATGHSSTSLSSAAGMARAQRLLGKDNKVIAVIGDGALTGGMALEALNDIGYRKDNLIIILNDNQMSICKNVGGLATYLNKLRMGVGYNKLKSDIGSTLDTTSFGKRVKNSLSKLKDGIKKIVVPSMYFEDIGLKYFGIVDGHNIRELNEVLSIAKNIKGPVIIHTVTKKGKGYELAEKNPNKYHGVSPFDLGEGVISKFASRNYSSTFGEEMIKLAKNDDKVVAITAAMPDGTGLKEFREEFPDRFFDVGIAEQHAVTLAAGMAAEGLKPFFAVYSTFLQRAYDQVLHDVCIQKLPVTLCLDRAGLVGEDGETHQGIFDISFLSPMPNMTIVAPKCIDEMEVILKWASNFNAPLAIRYPRGGDIDVNLKPLSKIEYGKWEKVQEGDKIAIVATGKMVQHAMIAAQKIKEEKNIDILIINATFIKPIDKELLNSLSKDGFKIVTIEDNIKKGGFGEGVLEYLNEIGHKEKIVTLAFNDKFIEHGKPDILYKINGLDAEGIKNTLIELL.

Thiamine diphosphate is bound by residues His74 and 115-117; that span reads GHS. Position 146 (Asp146) interacts with Mg(2+). Thiamine diphosphate-binding positions include 147–148, Asn175, Tyr285, and Glu365; that span reads GA. Mg(2+) is bound at residue Asn175.

This sequence belongs to the transketolase family. DXPS subfamily. Homodimer. The cofactor is Mg(2+). Thiamine diphosphate is required as a cofactor.

It catalyses the reaction D-glyceraldehyde 3-phosphate + pyruvate + H(+) = 1-deoxy-D-xylulose 5-phosphate + CO2. Its pathway is metabolic intermediate biosynthesis; 1-deoxy-D-xylulose 5-phosphate biosynthesis; 1-deoxy-D-xylulose 5-phosphate from D-glyceraldehyde 3-phosphate and pyruvate: step 1/1. Its function is as follows. Catalyzes the acyloin condensation reaction between C atoms 2 and 3 of pyruvate and glyceraldehyde 3-phosphate to yield 1-deoxy-D-xylulose-5-phosphate (DXP). The chain is 1-deoxy-D-xylulose-5-phosphate synthase from Clostridium perfringens (strain ATCC 13124 / DSM 756 / JCM 1290 / NCIMB 6125 / NCTC 8237 / Type A).